The chain runs to 347 residues: Glutamyl-Q tRNA(Asp) synthetase (347 aa).

L-glutamate contacts are provided by residues Arg31–Ser35 and Glu67. The short motif at Pro34 to Asn44 is the 'HIGH' region element. Residues Cys121, Cys123, Tyr143, and Cys147 each contribute to the Zn(2+) site. Residues Tyr203 and Arg221 each coordinate L-glutamate. The 'KMSKS' region motif lies at Arg259–Ser263. Residue Lys262 participates in ATP binding.

Belongs to the class-I aminoacyl-tRNA synthetase family. GluQ subfamily. Zn(2+) is required as a cofactor.

In terms of biological role, catalyzes the tRNA-independent activation of glutamate in presence of ATP and the subsequent transfer of glutamate onto a tRNA(Asp). Glutamate is transferred on the 2-amino-5-(4,5-dihydroxy-2-cyclopenten-1-yl) moiety of the queuosine in the wobble position of the QUC anticodon. In Cutibacterium acnes (strain DSM 16379 / KPA171202) (Propionibacterium acnes), this protein is Glutamyl-Q tRNA(Asp) synthetase.